A 96-amino-acid chain; its full sequence is UPF0235 protein PC1_3453 (96 aa).

This sequence belongs to the UPF0235 family.

The protein is UPF0235 protein PC1_3453 of Pectobacterium carotovorum subsp. carotovorum (strain PC1).